Reading from the N-terminus, the 368-residue chain is G kinase-anchoring protein 1 (368 aa).

3 disordered regions span residues 18–127 (LQVD…WKQR), 152–260 (EEHK…VRTE), and 333–368 (LHTA…EGDV). The segment covering 33 to 56 (PKAAGRGAGKPRSGKSPSGKNSQN) has biased composition (low complexity). A coiled-coil region spans residues 52–82 (KNSQNNEKKKEKRRRKKEQQQSEANELRSLA). Composition is skewed to polar residues over residues 88–100 (QKST…TLQD) and 109–121 (ANVQ…QENW). Residues 152 to 162 (EEHKKDADKAE) show a composition bias toward basic and acidic residues. A compositionally biased stretch (basic residues) spans 170-180 (TGGKKDRKKNQ). Positions 194–238 (FQQEDQLKNKPEREPVNPALRDDKFFNKLEDDVSKIVQRDKRREQ) are enriched in basic and acidic residues. The segment covering 239–250 (YSNSAGQEVNTS) has biased composition (polar residues). Over residues 251 to 260 (SEHEQDVRTE) the composition is skewed to basic and acidic residues. Positions 256-350 (DVRTEQLKYE…RSKVKGLQSE (95 aa)) form a coiled coil.

It belongs to the GKAP1 family.

The protein localises to the golgi apparatus. In terms of biological role, may play a role in the regulation of insulin-dependent IRS1 tyrosine phosphorylation in adipocytes. The sequence is that of G kinase-anchoring protein 1 (gkap1) from Danio rerio (Zebrafish).